We begin with the raw amino-acid sequence, 325 residues long: Large ribosomal subunit protein uL1m (325 aa).

A mitochondrion-targeting transit peptide spans 1-50 (MAATVRCFGRVLIHHQRCSLATVTSQTSLYPCCIYVPVPNRHFAAAAKPA). The disordered stretch occupies residues 47-66 (AKPAKKTKKGTKEKASNEKK). The span at 56–66 (GTKEKASNEKK) shows a compositional bias: basic and acidic residues.

The protein belongs to the universal ribosomal protein uL1 family.

The protein resides in the mitochondrion. This chain is Large ribosomal subunit protein uL1m (MRPL1), found in Bos taurus (Bovine).